The primary structure comprises 365 residues: GTPase Obg (365 aa).

Positions 1 to 159 (MKFIDEARIE…RMLKLELKVL (159 aa)) constitute an Obg domain. An OBG-type G domain is found at 160-334 (ADVGLLGMPN…LIYAIKDHLQ (175 aa)). GTP-binding positions include 166 to 173 (GMPNAGKS), 191 to 195 (FTTLH), 213 to 216 (DIPG), 284 to 287 (NKLD), and 315 to 317 (SAL). Mg(2+) contacts are provided by Ser173 and Thr193.

It belongs to the TRAFAC class OBG-HflX-like GTPase superfamily. OBG GTPase family. Monomer. The cofactor is Mg(2+).

The protein localises to the cytoplasm. An essential GTPase which binds GTP, GDP and possibly (p)ppGpp with moderate affinity, with high nucleotide exchange rates and a fairly low GTP hydrolysis rate. Plays a role in control of the cell cycle, stress response, ribosome biogenesis and in those bacteria that undergo differentiation, in morphogenesis control. This chain is GTPase Obg, found in Cupriavidus taiwanensis (strain DSM 17343 / BCRC 17206 / CCUG 44338 / CIP 107171 / LMG 19424 / R1) (Ralstonia taiwanensis (strain LMG 19424)).